Reading from the N-terminus, the 328-residue chain is Carbonic anhydrase-related protein 11 (328 aa).

A signal peptide spans 1-23; that stretch reads MGAAARLSAPRALVLWAALGAAA. In terms of domain architecture, Alpha-carbonic anhydrase spans 33–303; that stretch reads DWWSYKDNLQ…LAHRALRGNR (271 aa). N-linked (GlcNAc...) asparagine glycans are attached at residues Asn118, Asn170, and Asn260. The segment at 299 to 328 is disordered; sequence LRGNRDPRHPERRCRGPNYRLHVDGVPHGR. A compositionally biased stretch (basic and acidic residues) spans 319-328; that stretch reads LHVDGVPHGR.

It belongs to the alpha-carbonic anhydrase family. In terms of tissue distribution, expressed abundantly in the brain with moderate expression also present in spinal cord and thyroid.

It is found in the secreted. In terms of biological role, does not have a catalytic activity. The polypeptide is Carbonic anhydrase-related protein 11 (CA11) (Homo sapiens (Human)).